We begin with the raw amino-acid sequence, 444 residues long: Zinc finger CCCH domain-containing protein 63 (444 aa).

3 consecutive C3H1-type zinc fingers follow at residues 56–84, 101–129, and 147–175; these read RIGE…HPAD, RIGQ…HPRE, and RPNE…HPQP. Residues 251–276 form a disordered region; the sequence is GSSSSDDQQRTAGGAQYYTGSRHSET. 2 consecutive C3H1-type zinc fingers follow at residues 309–337 and 355–383; these read RPDQ…HPKE and RPGE…HPMG. The disordered stretch occupies residues 405 to 444; that stretch reads PVPAHSEVSPDNVSGRSRRITHSDSQQIPSGERGTEREAS.

The polypeptide is Zinc finger CCCH domain-containing protein 63 (Oryza sativa subsp. japonica (Rice)).